The chain runs to 299 residues: N-acetylmuramic acid 6-phosphate etherase (299 aa).

In terms of domain architecture, SIS spans 55–218 (CINCLEKNGR…STTVMVKMGK (164 aa)). The active-site Proton donor is Glu83. The active site involves Glu114.

The protein belongs to the GCKR-like family. MurNAc-6-P etherase subfamily. As to quaternary structure, homodimer.

The enzyme catalyses N-acetyl-D-muramate 6-phosphate + H2O = N-acetyl-D-glucosamine 6-phosphate + (R)-lactate. It functions in the pathway amino-sugar metabolism; N-acetylmuramate degradation. Functionally, specifically catalyzes the cleavage of the D-lactyl ether substituent of MurNAc 6-phosphate, producing GlcNAc 6-phosphate and D-lactate. In Pseudothermotoga lettingae (strain ATCC BAA-301 / DSM 14385 / NBRC 107922 / TMO) (Thermotoga lettingae), this protein is N-acetylmuramic acid 6-phosphate etherase.